Consider the following 124-residue polypeptide: Small ribosomal subunit protein uS12 (124 aa).

The tract at residues 1–26 (MPTISQLVGSERKRLTKKTKSPALKA) is disordered. A 3-methylthioaspartic acid modification is found at aspartate 89. Residues 104–124 (TAGVKDRRQSRSKYGAKAPKD) are disordered.

This sequence belongs to the universal ribosomal protein uS12 family. As to quaternary structure, part of the 30S ribosomal subunit. Contacts proteins S8 and S17. May interact with IF1 in the 30S initiation complex.

Its function is as follows. With S4 and S5 plays an important role in translational accuracy. In terms of biological role, interacts with and stabilizes bases of the 16S rRNA that are involved in tRNA selection in the A site and with the mRNA backbone. Located at the interface of the 30S and 50S subunits, it traverses the body of the 30S subunit contacting proteins on the other side and probably holding the rRNA structure together. The combined cluster of proteins S8, S12 and S17 appears to hold together the shoulder and platform of the 30S subunit. The polypeptide is Small ribosomal subunit protein uS12 (Prochlorococcus marinus (strain MIT 9215)).